The chain runs to 340 residues: MAEEKIPTVQDEKKLQALRMATEKIEKTFGKGAIMNMGANTVEDVSVIPSGSIGLDLALGVGGYPRGRIIEIYGPESSGKTTLAIHAIAEAQKAGGLAAIIDAEHAFDRTYAEKLGVNVDNLWIAQPDNGEQALEIAEQLIRSSAVDIIVIDSVAALTPKAEIEGEMGDNKVGLHARLMSQALRKMTGAISKSNTTCIFINQLREKIGVLFGNPETTTGGNALKFYASIRIDIRKSTPIKDGEEIMGHLTKVKVLKNKVAPPFRKAEFDIVFGEGISRSGEIIDLGVELDIIKKSGSWFSYGDTKLGQGREAAKEMIRDNEELAEELTEKIREAIRNKHS.

Residue 74–81 participates in ATP binding; that stretch reads GPESSGKT.

This sequence belongs to the RecA family.

It is found in the cytoplasm. Functionally, can catalyze the hydrolysis of ATP in the presence of single-stranded DNA, the ATP-dependent uptake of single-stranded DNA by duplex DNA, and the ATP-dependent hybridization of homologous single-stranded DNAs. It interacts with LexA causing its activation and leading to its autocatalytic cleavage. The protein is Protein RecA of Porphyromonas gingivalis (strain ATCC 33277 / DSM 20709 / CIP 103683 / JCM 12257 / NCTC 11834 / 2561).